A 423-amino-acid polypeptide reads, in one-letter code: Tyrosine--tRNA ligase (423 aa).

Tyr-35 contacts L-tyrosine. The short motif at 40–49 (PTAPSLHAGH) is the 'HIGH' region element. L-tyrosine-binding residues include Tyr-170 and Gln-174. Residues 230–234 (KFGKS) carry the 'KMSKS' region motif. Lys-233 serves as a coordination point for ATP. The S4 RNA-binding domain maps to 355 to 412 (DLITDLLVATGLSASKGAARRTIAEGGVSVNNMKIDSDEWTPQASDFLHGRWLVLRRG).

It belongs to the class-I aminoacyl-tRNA synthetase family. TyrS type 1 subfamily. As to quaternary structure, homodimer.

It localises to the cytoplasm. The catalysed reaction is tRNA(Tyr) + L-tyrosine + ATP = L-tyrosyl-tRNA(Tyr) + AMP + diphosphate + H(+). Functionally, catalyzes the attachment of tyrosine to tRNA(Tyr) in a two-step reaction: tyrosine is first activated by ATP to form Tyr-AMP and then transferred to the acceptor end of tRNA(Tyr). In Mycobacterium sp. (strain KMS), this protein is Tyrosine--tRNA ligase.